A 507-amino-acid polypeptide reads, in one-letter code: Phosphoprotein (507 aa).

The segment at 1-48 (MAEEQARHVKNGLECIRALKAEPIGSLAIGEAMAAWSEISDNPGQERA) is interaction with N0. 5 disordered regions span residues 42–91 (NPGQ…DDTE), 133–163 (SGLD…TEGY), 201–227 (NNFP…SETP), 252–273 (TQCA…GNVP), and 285–307 (WTPE…GDHY). Phosphoserine is present on residues Ser-86 and Ser-151. The span at 144–160 (GDNESENSDVDIGEPDT) shows a compositional bias: acidic residues. The span at 260 to 270 (SEPSGPGAPAG) shows a compositional bias: low complexity. The span at 286–301 (TPESGTTISPRSQNNK) shows a compositional bias: polar residues. The multimerization stretch occupies residues 304–376 (GDHYDDELFS…LSSIMIAIPG (73 aa)). 2 interaction with the L polymerase regions span residues 361 to 377 (STLE…IPGL) and 396 to 410 (PIIG…AEVL). The tract at residues 457 to 507 (GPVSRSVIRSIIKSSRIEEDRKRYLMTLLDDIKGANDLSKFHQMLMKIIMK) is x domain (XD). The interaction with the nucleocapsid (N-RNA) stretch occupies residues 459–507 (VSRSVIRSIIKSSRIEEDRKRYLMTLLDDIKGANDLSKFHQMLMKIIMK).

It belongs to the morbillivirus P protein family. Homotetramer. Interacts (via multimerization domain and XD domain) with polymerase L; this interaction forms the polymerase L-P complex. Interacts (via N-terminus) with N0 (via Ncore); this interaction allows P to chaperon N0 to avoid N polymerization and non-specific RNA binding before encapsidation. Interacts (via C-terminus) with N-RNA template (via Ntail); this interaction maintains the P/L complex anchored to the nucleocapsid template during the sequential transcription. Interacts (via C-terminus) with protein C this interaction allows C to associate with the ribonucleocapsid. Post-translationally, phosphorylation on serines by host CK2 is necessary for the formation of viral factories.

Essential cofactor of the RNA polymerase L that plays a central role in the transcription and replication by forming the polymerase complex with RNA polymerase L and recruiting L to the genomic N-RNA template for RNA synthesis. Also plays a central role in the encapsidation of nascent RNA chains by forming the encapsidation complex with the nucleocapsid protein N (N-P complex). Acts as a chaperone for newly synthesized free N protein, so-called N0, allowing encapsidation of nascent RNA chains during replication. The nucleoprotein protein N prevents excessive phosphorylation of P, which leads to down-regulation of viral transcription/ replication. Participates, together with N, in the formation of viral factories (viroplasms), which are large inclusions in the host cytoplasm where replication takes place. The sequence is that of Phosphoprotein (P/V) from Homo sapiens (Human).